Reading from the N-terminus, the 495-residue chain is Ectonucleoside triphosphate diphosphohydrolase 8 (495 aa).

Residues 1-8 lie on the Cytoplasmic side of the membrane; sequence MGLTWKQR. The chain crosses the membrane as a helical span at residues 9 to 29; it reads VFTALLGAAAVSGLTALLLVL. Residues 30–466 lie on the Extracellular side of the membrane; that stretch reads VGTMNVLLPP…PAQGWAQSFG (437 aa). Cysteine 78 and cysteine 102 are disulfide-bonded. Glutamate 168 (proton acceptor) is an active-site residue. A disulfide bond links cysteine 246 and cysteine 292. Asparagine 303 and asparagine 324 each carry an N-linked (GlcNAc...) asparagine glycan. Intrachain disulfides connect cysteine 328-cysteine 334 and cysteine 380-cysteine 403. The chain crosses the membrane as a helical span at residues 467 to 487; the sequence is VWAAGVVFVVLTLAATLGAVA. The Cytoplasmic portion of the chain corresponds to 488 to 495; it reads VQVFWLQD.

The protein belongs to the GDA1/CD39 NTPase family. Ca(2+) is required as a cofactor. Mg(2+) serves as cofactor. In terms of processing, N-glycosylated.

The protein resides in the cell membrane. The enzyme catalyses a ribonucleoside 5'-triphosphate + 2 H2O = a ribonucleoside 5'-phosphate + 2 phosphate + 2 H(+). Its function is as follows. Canalicular ectonucleoside NTPDase responsible for the main hepatic NTPDase activity. Ectonucleoside NTPDases catalyze the hydrolysis of gamma- and beta-phosphate residues of nucleotides, playing a central role in concentration of extracellular nucleotides. Has activity toward ATP, ADP, UTP and UDP, but not toward AMP. The protein is Ectonucleoside triphosphate diphosphohydrolase 8 (ENTPD8) of Bos taurus (Bovine).